The sequence spans 132 residues: Small ribosomal subunit protein uS8 (132 aa).

It belongs to the universal ribosomal protein uS8 family. Part of the 30S ribosomal subunit. Contacts proteins S5 and S12.

One of the primary rRNA binding proteins, it binds directly to 16S rRNA central domain where it helps coordinate assembly of the platform of the 30S subunit. This Mesorhizobium japonicum (strain LMG 29417 / CECT 9101 / MAFF 303099) (Mesorhizobium loti (strain MAFF 303099)) protein is Small ribosomal subunit protein uS8.